Reading from the N-terminus, the 117-residue chain is uncharacterized protein (117 aa).

It is found in the plastid. The protein resides in the chloroplast. This is an uncharacterized protein from Chlamydomonas reinhardtii (Chlamydomonas smithii).